The chain runs to 602 residues: Aspartate--tRNA(Asp/Asn) ligase (602 aa).

E187 contacts L-aspartate. An aspartate region spans residues 211 to 214; it reads QQFK. L-aspartate is bound by residues R233 and H461. Position 233–235 (233–235) interacts with ATP; it reads RDE. Residue E495 coordinates ATP. Position 502 (R502) interacts with L-aspartate. Position 547 to 550 (547 to 550) interacts with ATP; sequence GLDR.

Belongs to the class-II aminoacyl-tRNA synthetase family. Type 1 subfamily. Homodimer.

Its subcellular location is the cytoplasm. It carries out the reaction tRNA(Asx) + L-aspartate + ATP = L-aspartyl-tRNA(Asx) + AMP + diphosphate. In terms of biological role, aspartyl-tRNA synthetase with relaxed tRNA specificity since it is able to aspartylate not only its cognate tRNA(Asp) but also tRNA(Asn). Reaction proceeds in two steps: L-aspartate is first activated by ATP to form Asp-AMP and then transferred to the acceptor end of tRNA(Asp/Asn). This Chlorobium phaeovibrioides (strain DSM 265 / 1930) (Prosthecochloris vibrioformis (strain DSM 265)) protein is Aspartate--tRNA(Asp/Asn) ligase.